Reading from the N-terminus, the 328-residue chain is D-cysteine desulfhydrase (328 aa).

Residue lysine 51 is modified to N6-(pyridoxal phosphate)lysine.

This sequence belongs to the ACC deaminase/D-cysteine desulfhydrase family. In terms of assembly, homodimer. The cofactor is pyridoxal 5'-phosphate.

The enzyme catalyses D-cysteine + H2O = hydrogen sulfide + pyruvate + NH4(+) + H(+). Its function is as follows. Catalyzes the alpha,beta-elimination reaction of D-cysteine and of several D-cysteine derivatives. It could be a defense mechanism against D-cysteine. The chain is D-cysteine desulfhydrase from Escherichia coli O9:H4 (strain HS).